The primary structure comprises 650 residues: MSKHTHSFQAEVAQLLHLVTHSLYSNKEIFLRELVSNASDACDKLRFEALNNAALYEDAPNLEVRVSFDKEARTLTITDNGIGMSEQEAIDHLGTIAKSGTRDFMNRLSGDQKADAQLIGQFGVGFYSGFIVADRITVESRRAGLPASEGVRWASGGAGDFEVEAIERAARGTSVILHLREDAEEFLNAWKIKQVIGKYSDHISLPILMEKEEWKESEKEGEPGQMVKTGEWETVNKASALWTRPKKDITDEQYQDFYKSISHDFENPLTWSHNRVEGNTEYTQLLYIPAKAPFDLWNRDKKAGVKLYVKRVFIMDDAESLMPSYLRFVKGVIDSADLPLNVSRELLQESRDVRLIRDGSVKRVLSMLEDLAKHDKHEAAAEGADGVQDVVSAEDKAKEGKYTQFYAEFGAVLKEGLGEDFANRERLAKLLRFASTTSDTPSVSFADYKARMKEGQEAIYYITADTLAAAKNSPQLEVFKKKGIEVLLMTDRVDEWALNYLQDFDGTPLQSVAKGAVDLGKLQDEAEKKAAEEAAEAFKPMLAKLKEALKDKAEDVRVTTRLVDSPACLVVQDGGMSTQLARLLKQAGQSAPDAKPVLEVNPEHALVKKLDGSVHFHDLAHILFDQALLAEGGLPEDPAAYVKRVNALLA.

The segment at Met1–Arg344 is a; substrate-binding. The interval Glu345 to Arg582 is b. Residues Leu583–Ala650 are c.

The protein belongs to the heat shock protein 90 family. In terms of assembly, homodimer.

It is found in the cytoplasm. In terms of biological role, molecular chaperone. Has ATPase activity. This chain is Chaperone protein HtpG, found in Acidovorax sp. (strain JS42).